Reading from the N-terminus, the 101-residue chain is MPKEKDGVIYTINLRRLYWGRRSNRAKRAVRMVREFVARHFGVEPEDVKIDNTVNNYLWSGSITKPPARVQVYVTVKTESGEEGERKVAYVTLANVKDVED.

The protein belongs to the eukaryotic ribosomal protein eL31 family.

The protein is Large ribosomal subunit protein eL31 of Ignicoccus hospitalis (strain KIN4/I / DSM 18386 / JCM 14125).